The chain runs to 105 residues: Toxin ParE2 (105 aa).

It belongs to the RelE toxin family.

Its function is as follows. Toxic component of a type II toxin-antitoxin (TA) system. Its toxic effect is neutralized by coexpression with cognate antitoxin ParD2. The polypeptide is Toxin ParE2 (parE2) (Mycobacterium tuberculosis (strain CDC 1551 / Oshkosh)).